The sequence spans 342 residues: DNA-directed RNA polymerase subunit alpha (342 aa).

The segment at 1–239 is alpha N-terminal domain (alpha-NTD); it reads MTTFLAKNWS…DQLQVFINFQ (239 aa). The alpha C-terminal domain (alpha-CTD) stretch occupies residues 254 to 342; it reads INPVLLKKVY…SLAKKHEDQY (89 aa).

Belongs to the RNA polymerase alpha chain family. As to quaternary structure, homodimer. The RNAP catalytic core consists of 2 alpha, 1 beta, 1 beta' and 1 omega subunit. When a sigma factor is associated with the core the holoenzyme is formed, which can initiate transcription.

It carries out the reaction RNA(n) + a ribonucleoside 5'-triphosphate = RNA(n+1) + diphosphate. DNA-dependent RNA polymerase catalyzes the transcription of DNA into RNA using the four ribonucleoside triphosphates as substrates. This chain is DNA-directed RNA polymerase subunit alpha, found in Orientia tsutsugamushi (strain Ikeda) (Rickettsia tsutsugamushi).